We begin with the raw amino-acid sequence, 164 residues long: Ribosome maturation factor RimP (164 aa).

It belongs to the RimP family.

The protein resides in the cytoplasm. Its function is as follows. Required for maturation of 30S ribosomal subunits. The protein is Ribosome maturation factor RimP of Cellvibrio japonicus (strain Ueda107) (Pseudomonas fluorescens subsp. cellulosa).